The following is a 118-amino-acid chain: MFSTSRIISRINYNFLRKSHYSTKTVAEQAKGRFTPLIQKLSAVQQPIMYWANVSKELVQQVYHSQKIAPPSNTHSPFLFWKSQSSEAWGRNFFIAVEIVGIFCAGQMVGRRKITPYH.

The protein belongs to the ATPase g subunit family. F-type ATPases have 2 components, CF(1) - the catalytic core - and CF(0) - the membrane proton channel.

Its subcellular location is the mitochondrion membrane. Its function is as follows. Mitochondrial membrane ATP synthase (F(1)F(0) ATP synthase or Complex V) produces ATP from ADP in the presence of a proton gradient across the membrane which is generated by electron transport complexes of the respiratory chain. F-type ATPases consist of two structural domains, F(1) - containing the extramembraneous catalytic core, and F(0) - containing the membrane proton channel, linked together by a central stalk and a peripheral stalk. During catalysis, ATP synthesis in the catalytic domain of F(1) is coupled via a rotary mechanism of the central stalk subunits to proton translocation. Part of the complex F(0) domain. Minor subunit located with subunit a in the membrane. This is ATP synthase subunit g, mitochondrial (atp20) from Schizosaccharomyces pombe (strain 972 / ATCC 24843) (Fission yeast).